The sequence spans 549 residues: Undecaprenyl phosphate-alpha-4-amino-4-deoxy-L-arabinose arabinosyl transferase (549 aa).

Helical transmembrane passes span 9–29 (LLLIAFGLFYLVPLSNHGLWI), 80–100 (LFGVRIASVVATALSVLLAYL), 112–132 (SLACALLYASFGLIAGQSGYA), 136–156 (PQFTFWVNLSLVALWYALDAG), 176–196 (FLTKGFLAWLLPVLVALPYML), 204–224 (LLGYGALAVLVALLVCLPWAL), 256–276 (PWWFYLPLLAVACLPWSGLLP), 288–308 (QPPVAFLALWLLLPLAFFSLS), 312–332 (LPTYIMPCLLPLALLMGHALV), 346–366 (NGLLNLGLALLALAALAYLQL), 376–396 (FELFLVLLVIGAWAAAGLAQW), and 402–422 (AWAAPLLASWVLIALLPAAMP).

It belongs to the glycosyltransferase 83 family.

The protein localises to the cell inner membrane. It catalyses the reaction 4-amino-4-deoxy-alpha-L-arabinopyranosyl di-trans,octa-cis-undecaprenyl phosphate + lipid IVA = lipid IIA + di-trans,octa-cis-undecaprenyl phosphate.. It participates in lipopolysaccharide metabolism; 4-amino-4-deoxy-beta-L-arabinose-lipid A biosynthesis. Catalyzes the transfer of the L-Ara4N moiety of the glycolipid undecaprenyl phosphate-alpha-L-Ara4N to lipid A. The modified arabinose is attached to lipid A and is required for resistance to polymyxin and cationic antimicrobial peptides. This is Undecaprenyl phosphate-alpha-4-amino-4-deoxy-L-arabinose arabinosyl transferase from Pseudomonas paraeruginosa (strain DSM 24068 / PA7) (Pseudomonas aeruginosa (strain PA7)).